The chain runs to 1001 residues: MPSQVMDQRHHMSQYSHPTLAASSFSEELRLPTERQVGFWKQESLPHHMGSKSVASSPIEKPQPIGTRMAGRLELLQPYKLRDQGAAFSLEHKLFGQERHANLPPSPWRPDQETGRQTDSSLKSAALFSDGRINPNGAYNENGLFSSSVSDIFDKKLRLTSKNGLVGQSIEKVDLNHVDDEPFELTEEIEAQIIGNLLPDDDDLLSGVVDEVGYPTNANNRDDADDDIFYTGGGMELETDENKKLQEFNGSANDGIGLLNGVLNGEHLYREQPSRTLFVRNINSNVEDSELKLLFEHFGDIRALYTACKHRGFVMISYYDIRSALNAKMELQNKALRRRKLDIHYSIPKDNPSEKDINQGTIVLFNVDLSLTNDDLHKIFGDYGEIKEIRDTPQKGHHKIIEFYDVRAAEAALRALNRNDIAGKKIKLETSRLGAARRLSQHMSSELCQEEFGVCKLGSPSTSSPPIASFGSTNLATITSTGHENGSIQGMHSGLQTSISQFRETSFPGLSSTIPQSLSTPIGISSGATHSNQAALGEISQSLGRMNGHMNYSFQGMSALHPHSLPEVHNGVNNGVPYNLNSMAQVVNGTNSRTAEAVDNRHLHKVGSGNLNGHSFDRAEGALGFSRSGSSSVRGHQLMWNNSSNFHHHPNSPVLWPSPGSFVNNVPSRSPAQMHGVPRAPSSHMIDNVLPMHHLHVGSAPAINPSLWDRRHGYAGELTEAPNFHPGSVGSMGFPGSPQLHSMELNNIYPQTGGNCMDPTVSPAQIGGPSPQQRGSMFHGRNPMVPLPSFDSPGERMRSRRNDSNGNQSDNKKQYELDVDRIVRGDDSRTTLMIKNIPNKYTSKMLLAAIDENHKGTYDFIYLPIDFKNKCNVGYAFINMTNPQHIIPFYQTFNGKKWEKFNSEKVASLAYARIQGKSALIAHFQNSSLMNEDKRCRPILFHSDGPNAGDQEPFPMGTNIRARSGRSRASSGEESHQDISITSVNCDTSTNGVDTTGPAKD.

Residues 100–120 (HANLPPSPWRPDQETGRQTDS) form a disordered region. 2 RRM domains span residues 275–348 (RTLF…YSIP) and 360–433 (GTIV…TSRL). 2 disordered regions span residues 767-815 (GGPS…KKQY) and 941-1001 (FHSD…PAKD). Over residues 793 to 803 (PGERMRSRRND) the composition is skewed to basic and acidic residues. Over residues 978 to 994 (DISITSVNCDTSTNGVD) the composition is skewed to polar residues.

Probable RNA-binding protein that may play a role in growth regulation. The protein is Protein MEI2-like 4 (ML4) of Oryza sativa subsp. japonica (Rice).